A 324-amino-acid polypeptide reads, in one-letter code: Beta-ketoacyl-[acyl-carrier-protein] synthase III (324 aa).

Active-site residues include C114 and H251. Residues 252 to 256 form an ACP-binding region; sequence QANLR. N281 is an active-site residue.

Belongs to the thiolase-like superfamily. FabH family. Homodimer.

The protein localises to the cytoplasm. The enzyme catalyses malonyl-[ACP] + acetyl-CoA + H(+) = 3-oxobutanoyl-[ACP] + CO2 + CoA. Its pathway is lipid metabolism; fatty acid biosynthesis. Its function is as follows. Catalyzes the condensation reaction of fatty acid synthesis by the addition to an acyl acceptor of two carbons from malonyl-ACP. Catalyzes the first condensation reaction which initiates fatty acid synthesis and may therefore play a role in governing the total rate of fatty acid production. Possesses both acetoacetyl-ACP synthase and acetyl transacylase activities. Its substrate specificity determines the biosynthesis of branched-chain and/or straight-chain of fatty acids. This is Beta-ketoacyl-[acyl-carrier-protein] synthase III from Rhodobacter capsulatus (Rhodopseudomonas capsulata).